We begin with the raw amino-acid sequence, 347 residues long: GDT1-like protein 2, chloroplastic (347 aa).

A chloroplast-targeting transit peptide spans 1–12 (MATAISVGVAVP). The tract at residues 70–97 (EAGSHGEHLDSSATRDSNKPTKPPSGSR) is disordered. 7 helical membrane-spanning segments follow: residues 99–119 (PQSI…IVFF), 124–144 (SAVV…LIFV), 165–185 (ALVL…SVII), 196–216 (FQTT…FFGF), 257–277 (LTSP…AEWG), 299–319 (GAIA…AFLA), and 327–347 (VGLI…FGVF).

This sequence belongs to the GDT1 family.

The protein localises to the plastid. The protein resides in the chloroplast membrane. This Oryza sativa subsp. japonica (Rice) protein is GDT1-like protein 2, chloroplastic.